The sequence spans 147 residues: Peptide deformylase (147 aa).

Fe cation is bound by residues C88 and H130. The active site involves E131. Fe cation is bound at residue H134.

The protein belongs to the polypeptide deformylase family. Requires Fe(2+) as cofactor.

The catalysed reaction is N-terminal N-formyl-L-methionyl-[peptide] + H2O = N-terminal L-methionyl-[peptide] + formate. Functionally, removes the formyl group from the N-terminal Met of newly synthesized proteins. Requires at least a dipeptide for an efficient rate of reaction. N-terminal L-methionine is a prerequisite for activity but the enzyme has broad specificity at other positions. This chain is Peptide deformylase, found in Clostridium botulinum (strain Alaska E43 / Type E3).